Here is a 131-residue protein sequence, read N- to C-terminus: MARRKRAAARKKKVKKNIESGIATINSTFNNTLVNITDSDGNTMAWSSSGACGFKGSRKGTPYAAQIAAETAAKTAMEDGLKGVEVRVKGPGSGREAAIRSLQAAGLEINAIKDITPIPHNGCRPPKRRRV.

It belongs to the universal ribosomal protein uS11 family. As to quaternary structure, part of the 30S ribosomal subunit. Interacts with proteins S7 and S18. Binds to IF-3.

Its function is as follows. Located on the platform of the 30S subunit, it bridges several disparate RNA helices of the 16S rRNA. Forms part of the Shine-Dalgarno cleft in the 70S ribosome. The chain is Small ribosomal subunit protein uS11 from Natranaerobius thermophilus (strain ATCC BAA-1301 / DSM 18059 / JW/NM-WN-LF).